The chain runs to 162 residues: SsrA-binding protein (162 aa).

This sequence belongs to the SmpB family.

It localises to the cytoplasm. Required for rescue of stalled ribosomes mediated by trans-translation. Binds to transfer-messenger RNA (tmRNA), required for stable association of tmRNA with ribosomes. tmRNA and SmpB together mimic tRNA shape, replacing the anticodon stem-loop with SmpB. tmRNA is encoded by the ssrA gene; the 2 termini fold to resemble tRNA(Ala) and it encodes a 'tag peptide', a short internal open reading frame. During trans-translation Ala-aminoacylated tmRNA acts like a tRNA, entering the A-site of stalled ribosomes, displacing the stalled mRNA. The ribosome then switches to translate the ORF on the tmRNA; the nascent peptide is terminated with the 'tag peptide' encoded by the tmRNA and targeted for degradation. The ribosome is freed to recommence translation, which seems to be the essential function of trans-translation. In Sorangium cellulosum (strain So ce56) (Polyangium cellulosum (strain So ce56)), this protein is SsrA-binding protein.